The chain runs to 409 residues: MASGKAAGKSDAPTPIIKLGGPKPPKIGSSGNASWFQAIKAKKLNVPQPKFEGSGVPDNNNIKPSQQHGYWRRQARYKPGKSGRKPVPDAWYFYYTGTGPAADLNWGENQDGIVWVAAKGADTKSRSNQGTRDPDKFDQYPLRFSDGGPDGNFRWDFIPLNRGRSGRSTAASSAASSRAPSREGSRGRRSGAEDDLIARAAKIIQDQQKRGSRITKAKADEMAHRRYCKRTIPPGYRVDQVFGPRTKGKEGNFGDDKMNEEGIKDGRVTATLNLIPSSHACLFGSRVTPKLQPDGLHLKFEFTTVVPRDDPQFDNYVKICDQCVDGVGTRPKDDEPRPKSRSSSRPATRGNSPAPRQQRPKKEKKPKKQDDEVDKALTSDEERNNAQLEFDDEPKVINWGDSALGENEL.

Disordered regions lie at residues 1–32 (MASG…SSGN), 47–84 (PQPK…KSGR), 121–145 (ADTK…LRFS), and 164–194 (RSGR…GAED). Positions 29–160 (SSGNASWFQA…GNFRWDFIPL (132 aa)) are RNA-binding. The CoV N NTD domain occupies 31–156 (GNASWFQAIK…GGPDGNFRWD (126 aa)). Positions 57–68 (PDNNNIKPSQQH) are enriched in polar residues. Over residues 70–84 (YWRRQARYKPGKSGR) the composition is skewed to basic residues. A compositionally biased stretch (low complexity) spans 164–179 (RSGRSTAASSAASSRA). A compositionally biased stretch (basic and acidic residues) spans 180–192 (PSREGSRGRRSGA). Ser-190 carries the post-translational modification Phosphoserine; by host. A CoV N CTD domain is found at 215–331 (TKAKADEMAH…QCVDGVGTRP (117 aa)). Residues 226-333 (RYCKRTIPPG…VDGVGTRPKD (108 aa)) form a dimerization region. An intrachain disulfide couples Cys-320 to Cys-323. Residues 326 to 409 (GVGTRPKDDE…GDSALGENEL (84 aa)) form a disordered region. A compositionally biased stretch (basic residues) spans 358 to 367 (QRPKKEKKPK). Residues 368–384 (KQDDEVDKALTSDEERN) show a composition bias toward basic and acidic residues. Residue Thr-378 is modified to Phosphothreonine; by host. Ser-379 bears the Phosphoserine; by host mark.

It belongs to the gammacoronavirus nucleocapsid protein family. Homooligomer. Both monomeric and oligomeric forms interact with RNA. Interacts with protein M. Interacts with NSP3; this interaction serves to tether the genome to the newly translated replicase-transcriptase complex at a very early stage of infection. Post-translationally, ADP-ribosylated. The ADP-ribosylation is retained in the virion during infection. Phosphorylated on serine and threonine residues.

Its subcellular location is the virion. The protein resides in the host endoplasmic reticulum-Golgi intermediate compartment. The protein localises to the host Golgi apparatus. In terms of biological role, packages the positive strand viral genome RNA into a helical ribonucleocapsid (RNP) and plays a fundamental role during virion assembly through its interactions with the viral genome and membrane protein M. Plays an important role in enhancing the efficiency of subgenomic viral RNA transcription as well as viral replication. This is Nucleoprotein from Gallus gallus (Chicken).